A 296-amino-acid polypeptide reads, in one-letter code: Elongation factor Ts (296 aa).

The involved in Mg(2+) ion dislocation from EF-Tu stretch occupies residues 82–85 (TDFV).

Belongs to the EF-Ts family.

The protein localises to the cytoplasm. Functionally, associates with the EF-Tu.GDP complex and induces the exchange of GDP to GTP. It remains bound to the aminoacyl-tRNA.EF-Tu.GTP complex up to the GTP hydrolysis stage on the ribosome. This Coxiella burnetii (strain CbuK_Q154) (Coxiella burnetii (strain Q154)) protein is Elongation factor Ts.